The following is a 23-amino-acid chain: Basic phospholipase A2 homolog CTs-K49c (23 aa).

Contains 7 disulfide bonds. In terms of tissue distribution, expressed by the venom gland.

It is found in the secreted. Functionally, snake venom phospholipase A2 homolog that lacks catalytic activity. Shows myotoxic activities. Induces local edema a few hours after injection (5-10 ug) in the hind paw. The polypeptide is Basic phospholipase A2 homolog CTs-K49c (Trimeresurus stejnegeri (Chinese green tree viper)).